Here is a 369-residue protein sequence, read N- to C-terminus: Choline kinase B2 (369 aa).

It belongs to the choline/ethanolamine kinase family. It depends on Mg(2+) as a cofactor.

The catalysed reaction is choline + ATP = phosphocholine + ADP + H(+). It functions in the pathway phospholipid metabolism; phosphatidylcholine biosynthesis; phosphocholine from choline: step 1/1. Functionally, catalyzes the first step in phosphatidylcholine biosynthesis. Phosphorylates choline. This is Choline kinase B2 (ckb-2) from Caenorhabditis elegans.